The following is a 252-amino-acid chain: Isoprenyl transferase (252 aa).

The active site involves Asp28. Residue Asp28 coordinates Mg(2+). Substrate-binding positions include 29 to 32, Trp33, Arg41, His45, and 73 to 75; these read GNGR and STE. The active-site Proton acceptor is Asn76. Residues Trp77, Arg79, Arg200, and 206–208 contribute to the substrate site; that span reads RLS. Glu219 serves as a coordination point for Mg(2+).

This sequence belongs to the UPP synthase family. As to quaternary structure, homodimer. It depends on Mg(2+) as a cofactor.

Its function is as follows. Catalyzes the condensation of isopentenyl diphosphate (IPP) with allylic pyrophosphates generating different type of terpenoids. This is Isoprenyl transferase from Streptococcus pneumoniae serotype 4 (strain ATCC BAA-334 / TIGR4).